The following is a 153-amino-acid chain: Iron-sulfur cluster assembly scaffold protein IscU 1 (153 aa).

C33, C58, H101, and C102 together coordinate [2Fe-2S] cluster.

Belongs to the NifU family. Forms a heterotetramer with IscS2.

Its function is as follows. A scaffold on which IscS assembles Fe-S clusters. Subsequently gives the nascent cluster to other proteins. It is likely that Fe-S cluster coordination is flexible as the role of this complex is to build and then hand off Fe-S clusters. The sequence is that of Iron-sulfur cluster assembly scaffold protein IscU 1 (iscU1) from Archaeoglobus fulgidus (strain ATCC 49558 / DSM 4304 / JCM 9628 / NBRC 100126 / VC-16).